The primary structure comprises 101 residues: Signal recognition particle 19 kDa protein (101 aa).

It belongs to the SRP19 family. In terms of assembly, part of the signal recognition particle protein translocation system, which is composed of SRP and FtsY. Archaeal SRP consists of a 7S RNA molecule of 300 nucleotides and two protein subunits: SRP54 and SRP19.

It localises to the cytoplasm. Involved in targeting and insertion of nascent membrane proteins into the cytoplasmic membrane. Binds directly to 7S RNA and mediates binding of the 54 kDa subunit of the SRP. This chain is Signal recognition particle 19 kDa protein, found in Thermofilum pendens (strain DSM 2475 / Hrk 5).